Consider the following 143-residue polypeptide: Large ribosomal subunit protein uL15 (143 aa).

Composition is skewed to basic residues over residues 1–13 (MIRKSKKITKMRG) and 23–38 (KKHRGAGHRGGRGNAG). The interval 1–38 (MIRKSKKITKMRGSRTCGYGEAKKHRGAGHRGGRGNAG) is disordered.

It belongs to the universal ribosomal protein uL15 family. In terms of assembly, part of the 50S ribosomal subunit.

Functionally, binds to the 23S rRNA. In Methanococcus maripaludis (strain C6 / ATCC BAA-1332), this protein is Large ribosomal subunit protein uL15.